Here is a 951-residue protein sequence, read N- to C-terminus: Serine/threonine-protein phosphatase 4 regulatory subunit 1 (951 aa).

HEAT repeat units lie at residues 26 to 63 (ESDV…VFNR), 82 to 119 (RDCI…FCQE), 127 to 164 (AFSK…QELI), 168 to 206 (DVET…MVGK), 208 to 246 (ITER…VVGQ), 248 to 285 (ATEE…ATCQ), and 287 to 324 (IRRT…TFAN). Disordered regions lie at residues 326–395 (SSSG…DMRV), 407–501 (SESP…MATR), 539–569 (HDEA…SISE), and 592–612 (GGAD…ERRP). Composition is skewed to basic and acidic residues over residues 332 to 360 (FKDE…RPED), 464 to 483 (DLDK…ERTG), and 539 to 551 (HDEA…RSEL). The stretch at 502–539 (KELEEMIENLEPHMDDPDVKAQVEVLSAALRASTLDAH) is one HEAT 8 repeat. A compositionally biased stretch (gly residues) spans 594–604 (ADVGPGGGGGF). HEAT repeat units follow at residues 699–735 (LTAA…LLHI), 777–815 (RDVY…KLHM), 820–858 (TFGV…DDCL), and 862–899 (QFAV…EKEY). S936 carries the phosphoserine modification.

In terms of assembly, serine/threonine-protein phosphatase 4 (PP4) occurs in different assemblies of the catalytic and one or more regulatory subunits. Component of the PP4 complex PPP4C-PPP4R1. Interacts with HDAC3.

In terms of biological role, regulatory subunit of serine/threonine-protein phosphatase 4. May play a role in regulation of cell division in renal glomeruli. The PPP4C-PPP4R1 PP4 complex may play a role in dephosphorylation and regulation of HDAC3. Plays a role in the inhibition of TNF-induced NF-kappa-B activation by regulating the dephosphorylation of TRAF2. The sequence is that of Serine/threonine-protein phosphatase 4 regulatory subunit 1 (Ppp4r1) from Rattus norvegicus (Rat).